Reading from the N-terminus, the 380-residue chain is Carbamoyl phosphate synthase small chain (380 aa).

The interval 1-187 (MTTSTRGAAK…VVPAIGAKRF (187 aa)) is CPSase. 3 residues coordinate L-glutamine: S55, G236, and G238. Positions 188–380 (TVAAVDLGIK…FVSLMEGQRA (193 aa)) constitute a Glutamine amidotransferase type-1 domain. Residue C264 is the Nucleophile of the active site. Residues F265, Q268, N306, G308, and F309 each contribute to the L-glutamine site. Residues H354 and E356 contribute to the active site.

Belongs to the CarA family. In terms of assembly, composed of two chains; the small (or glutamine) chain promotes the hydrolysis of glutamine to ammonia, which is used by the large (or ammonia) chain to synthesize carbamoyl phosphate. Tetramer of heterodimers (alpha,beta)4.

It catalyses the reaction hydrogencarbonate + L-glutamine + 2 ATP + H2O = carbamoyl phosphate + L-glutamate + 2 ADP + phosphate + 2 H(+). It carries out the reaction L-glutamine + H2O = L-glutamate + NH4(+). It participates in amino-acid biosynthesis; L-arginine biosynthesis; carbamoyl phosphate from bicarbonate: step 1/1. It functions in the pathway pyrimidine metabolism; UMP biosynthesis via de novo pathway; (S)-dihydroorotate from bicarbonate: step 1/3. In terms of biological role, small subunit of the glutamine-dependent carbamoyl phosphate synthetase (CPSase). CPSase catalyzes the formation of carbamoyl phosphate from the ammonia moiety of glutamine, carbonate, and phosphate donated by ATP, constituting the first step of 2 biosynthetic pathways, one leading to arginine and/or urea and the other to pyrimidine nucleotides. The small subunit (glutamine amidotransferase) binds and cleaves glutamine to supply the large subunit with the substrate ammonia. The sequence is that of Carbamoyl phosphate synthase small chain from Streptomyces avermitilis (strain ATCC 31267 / DSM 46492 / JCM 5070 / NBRC 14893 / NCIMB 12804 / NRRL 8165 / MA-4680).